A 219-amino-acid chain; its full sequence is Orotate phosphoribosyltransferase (219 aa).

Lys-26 contributes to the 5-phospho-alpha-D-ribose 1-diphosphate binding site. 34-35 (FF) serves as a coordination point for orotate. Residues 72-73 (YK), Arg-102, Lys-103, Lys-106, His-108, and 128-136 (DDVITAGTA) each bind 5-phospho-alpha-D-ribose 1-diphosphate. 2 residues coordinate orotate: Thr-132 and Arg-160.

The protein belongs to the purine/pyrimidine phosphoribosyltransferase family. PyrE subfamily. In terms of assembly, homodimer.

It carries out the reaction orotidine 5'-phosphate + diphosphate = orotate + 5-phospho-alpha-D-ribose 1-diphosphate. It functions in the pathway pyrimidine metabolism; UMP biosynthesis via de novo pathway; UMP from orotate: step 1/2. In terms of biological role, catalyzes the transfer of a ribosyl phosphate group from 5-phosphoribose 1-diphosphate to orotate, leading to the formation of orotidine monophosphate (OMP). The chain is Orotate phosphoribosyltransferase (URA5) from Yarrowia lipolytica (strain CLIB 122 / E 150) (Yeast).